We begin with the raw amino-acid sequence, 222 residues long: Flagellin B5 (222 aa).

A propeptide spanning residues 1–4 (MRRG) is cleaved from the precursor.

The protein belongs to the archaeal flagellin family.

The protein localises to the archaeal flagellum. Flagellin is the subunit protein which polymerizes to form the filaments of archaeal flagella. This chain is Flagellin B5 (flaB5), found in Pyrococcus abyssi (strain GE5 / Orsay).